The primary structure comprises 316 residues: Acetaldehyde dehydrogenase (316 aa).

NAD(+) is bound at residue 11–14; the sequence is SGNI. Residue C131 is the Acyl-thioester intermediate of the active site. NAD(+) contacts are provided by residues 162–170 and N289; that span reads SAGPGTRAN.

The protein belongs to the acetaldehyde dehydrogenase family. Interacts with MhpE.

The catalysed reaction is acetaldehyde + NAD(+) + CoA = acetyl-CoA + NADH + H(+). Its pathway is aromatic compound metabolism; 3-phenylpropanoate degradation. Its function is as follows. Catalyzes the conversion of acetaldehyde to acetyl-CoA, using NAD(+) and coenzyme A. Is the final enzyme in the meta-cleavage pathway for the degradation of aromatic compounds. This is Acetaldehyde dehydrogenase from Escherichia coli O7:K1 (strain IAI39 / ExPEC).